A 1107-amino-acid polypeptide reads, in one-letter code: Dynein axonemal assembly factor 1 homolog (1107 aa).

LRR repeat units lie at residues 34-56 (HLND…EEYV), 57-78 (GLKC…EYQT), 79-100 (ELKC…DSCK), 101-122 (QLDT…GHDI), 125-146 (VLNT…DHLR), and 150-171 (FVSV…KILG). Residues 184 to 223 (NPVVNEIPSYRKTLILECKNLTYLDTRPVFDRDRACAEAW) form the LRRCT domain. 6 disordered regions span residues 258-281 (HRGD…KASK), 428-487 (NESP…TLNV), 500-608 (ESKD…LEKE), 780-810 (KEEP…EHEQ), 834-855 (SSED…AEED), and 1070-1107 (AAHA…DNCD). The span at 428–437 (NESPLTSPSF) shows a compositional bias: polar residues. A compositionally biased stretch (acidic residues) spans 446–459 (EEIEPTDVEEEQQI). Basic and acidic residues predominate over residues 500 to 512 (ESKDGELISKVES). Residues 531–544 (DNSESEPTDITNED) are compositionally biased toward acidic residues. Residues 549–560 (SSSVSVTSSTDS) show a composition bias toward low complexity. Positions 581–597 (NYRQDSTTSTDSENEVS) are enriched in polar residues. Residues 801 to 810 (LEVHSSEHEQ) show a composition bias toward basic and acidic residues. Over residues 844–855 (DSSESSDSAEED) the composition is skewed to acidic residues. The segment covering 1083–1097 (VESKPVEIDGTKEET) has biased composition (basic and acidic residues). Residues 1098–1107 (VDSELADNCD) are compositionally biased toward acidic residues.

The protein belongs to the DNAAF1 family.

It localises to the cell projection. The protein localises to the cilium. Functionally, cilium-specific protein required for cilia structures. This chain is Dynein axonemal assembly factor 1 homolog, found in Aedes aegypti (Yellowfever mosquito).